The primary structure comprises 252 residues: Autophagy-related protein 27 (252 aa).

Residues 1-15 form the signal peptide; it reads MILASLLTFATAALA. An MRH domain is found at 16 to 161; it reads FDCSDKELER…SMKTKAACIT (146 aa). Topologically, residues 16–176 are lumenal; it reads FDCSDKELER…KKEKHDNGES (161 aa). Cystine bridges form between C18/C57, C66/C73, and C130/C159. A glycan (N-linked (GlcNAc...) asparagine) is linked at N49. The chain crosses the membrane as a helical span at residues 177-197; sequence WGWFTWIFIFLVLFLSIYIIG. The Cytoplasmic portion of the chain corresponds to 198-252; it reads GAWFQYNKGNAIDFQSALKEVVENFIELLKGLPSFGKEIIEKFTGRSNRGEYSAV.

The protein belongs to the ATG27 family.

The protein localises to the cytoplasmic vesicle membrane. The protein resides in the golgi apparatus membrane. It localises to the mitochondrion membrane. It is found in the preautophagosomal structure membrane. Functionally, plays a key role in autophagy. Effector of VPS34 phosphatidylinositol 3-phosphate kinase signaling. Regulates the cytoplasm to vacuole transport (Cvt) vesicle formation. Plays a role in ATG protein retrieval from the pre-autophagosomal structure (PAS) and is especially required for autophagy-dependent cycling of ATG9. Finally, plays an important role in biofilm formation and resistance to antifungal compounds such as fluconazole, itraconazole, terbinafine and caspofungin. In Candida albicans (strain SC5314 / ATCC MYA-2876) (Yeast), this protein is Autophagy-related protein 27.